We begin with the raw amino-acid sequence, 108 residues long: Latartoxin-2c (108 aa).

The N-terminal stretch at 1-19 (MKVLVITALCFILLQNVLG) is a signal peptide. A propeptide spans 20 to 42 (EDTYEDLQNYIENLINENQDEAR) (removed in mature form). A Processing quadruplet motif motif is present at residues 39–42 (DEAR). 4 disulfide bridges follow: cysteine 44–cysteine 61, cysteine 51–cysteine 72, cysteine 60–cysteine 84, and cysteine 74–cysteine 82. Position 107 is an isoleucine amide (isoleucine 107).

It belongs to the neurotoxin 19 (CSTX) family. 11 (latartoxin) subfamily. Contains 4 disulfide bonds. In terms of processing, cleavage of the propeptide depends on the processing quadruplet motif (XXXR, with at least one of X being E). As to expression, expressed by the venom gland.

The protein resides in the secreted. In terms of biological role, insect toxin. This chain is Latartoxin-2c, found in Lachesana tarabaevi (Spider).